A 250-amino-acid chain; its full sequence is Phosphoribosylaminoimidazole-succinocarboxamide synthase (250 aa).

The protein belongs to the SAICAR synthetase family.

The catalysed reaction is 5-amino-1-(5-phospho-D-ribosyl)imidazole-4-carboxylate + L-aspartate + ATP = (2S)-2-[5-amino-1-(5-phospho-beta-D-ribosyl)imidazole-4-carboxamido]succinate + ADP + phosphate + 2 H(+). The protein operates within purine metabolism; IMP biosynthesis via de novo pathway; 5-amino-1-(5-phospho-D-ribosyl)imidazole-4-carboxamide from 5-amino-1-(5-phospho-D-ribosyl)imidazole-4-carboxylate: step 1/2. The protein is Phosphoribosylaminoimidazole-succinocarboxamide synthase of Synechococcus sp. (strain CC9605).